The following is a 462-amino-acid chain: uncharacterized protein (462 aa).

Residues 22-90 enclose the HTH gntR-type domain; it reads KPIYKALAGQ…VGSGTFVSYD (69 aa). The H-T-H motif DNA-binding region spans 50 to 69; sequence QRELADYLDLNVSTISKAFK. The residue at position 308 (Lys-308) is an N6-(pyridoxal phosphate)lysine.

The protein in the C-terminal section; belongs to the class-I pyridoxal-phosphate-dependent aminotransferase family. Requires pyridoxal 5'-phosphate as cofactor.

This is an uncharacterized protein from Bacillus subtilis (strain 168).